Reading from the N-terminus, the 265-residue chain is Putative 2-aminoethylphosphonate transport system permease protein PhnV (265 aa).

6 helical membrane passes run 13–33 (GVVA…VILM), 69–89 (LTIG…AALA), 104–124 (VFYL…LVAF), 131–151 (MNGT…AFTF), 185–205 (LPLL…LSMG), and 233–253 (NIAD…LLMM). The ABC transmembrane type-1 domain occupies 65 to 253 (LLASLTIGFC…LVAITLLLMM (189 aa)).

The protein belongs to the binding-protein-dependent transport system permease family.

It localises to the cell inner membrane. Functionally, probably part of the PhnSTUV complex (TC 3.A.1.11.5) involved in 2-aminoethylphosphonate import. Probably responsible for the translocation of the substrate across the membrane. This chain is Putative 2-aminoethylphosphonate transport system permease protein PhnV (phnV), found in Salmonella paratyphi A (strain ATCC 9150 / SARB42).